A 315-amino-acid polypeptide reads, in one-letter code: L-lactate dehydrogenase (315 aa).

NAD(+) contacts are provided by residues valine 16, aspartate 37, and 81-82 (GA). Substrate is bound by residues glutamine 84, arginine 90, and 122-125 (NPVD). NAD(+) contacts are provided by residues 120–122 (VSN) and serine 145. 150 to 153 (DTAR) serves as a coordination point for substrate. Residues arginine 155 and histidine 170 each coordinate beta-D-fructose 1,6-bisphosphate. Histidine 177 (proton acceptor) is an active-site residue. Tyrosine 224 carries the post-translational modification Phosphotyrosine. Threonine 233 lines the substrate pocket.

The protein belongs to the LDH/MDH superfamily. LDH family. In terms of assembly, homotetramer.

It localises to the cytoplasm. The catalysed reaction is (S)-lactate + NAD(+) = pyruvate + NADH + H(+). It participates in fermentation; pyruvate fermentation to lactate; (S)-lactate from pyruvate: step 1/1. Its activity is regulated as follows. Allosterically activated by fructose 1,6-bisphosphate (FBP). Functionally, catalyzes the conversion of lactate to pyruvate. The sequence is that of L-lactate dehydrogenase from Treponema denticola (strain ATCC 35405 / DSM 14222 / CIP 103919 / JCM 8153 / KCTC 15104).